The sequence spans 423 residues: Putative competence-damage inducible protein (423 aa).

It belongs to the CinA family.

The polypeptide is Putative competence-damage inducible protein (Streptococcus pyogenes serotype M12 (strain MGAS2096)).